A 335-amino-acid polypeptide reads, in one-letter code: L-threo-3-deoxy-hexylosonate aldolase (335 aa).

Residue 50-51 coordinates substrate; sequence SN. Lys175 serves as the catalytic Schiff-base intermediate with substrate.

It belongs to the DapA family.

The catalysed reaction is 2-dehydro-3-deoxy-L-galactonate = L-glyceraldehyde + pyruvate. It functions in the pathway carbohydrate acid metabolism. Functionally, mediates the conversion of 2-dehydro-3-deoxy-L-galactonate to pyruvate and L-glyceraldehyde in D-galacturonate catabolic process. The chain is L-threo-3-deoxy-hexylosonate aldolase (gaaC) from Aspergillus niger.